The chain runs to 205 residues: Outer-membrane lipoprotein LolB (205 aa).

Residues methionine 1–glycine 17 form the signal peptide. Cysteine 18 carries N-palmitoyl cysteine lipidation. Cysteine 18 carries S-diacylglycerol cysteine lipidation.

The protein belongs to the LolB family. Monomer.

It is found in the cell outer membrane. In terms of biological role, plays a critical role in the incorporation of lipoproteins in the outer membrane after they are released by the LolA protein. The sequence is that of Outer-membrane lipoprotein LolB from Pseudomonas putida (strain ATCC 47054 / DSM 6125 / CFBP 8728 / NCIMB 11950 / KT2440).